A 1102-amino-acid chain; its full sequence is Carbamoyl phosphate synthase large chain (1102 aa).

The interval 1–408 (MPKRSDIQSV…ALQKALRSLE (408 aa)) is carboxyphosphate synthetic domain. ATP is bound by residues Arg-129, Arg-175, Gly-181, Gly-182, Glu-214, Ile-216, Glu-221, Gly-247, Val-248, His-249, Gln-291, and Glu-305. The 198-residue stretch at 137-334 (EAVKEKIGYG…IAKIAAKLAV (198 aa)) folds into the ATP-grasp 1 domain. Residues Gln-291, Glu-305, and Asn-307 each coordinate Mg(2+). The Mn(2+) site is built by Gln-291, Glu-305, and Asn-307. Positions 409-551 (KKGSQFAFTG…YFYSSYDEES (143 aa)) are oligomerization domain. Residues 552–954 (EVAPRTKPAV…AYAKSQAGAY (403 aa)) are carbamoyl phosphate synthetic domain. Residues 682–873 (GRVLAEAGLP…LAKAAARISL (192 aa)) form the ATP-grasp 2 domain. Positions 718, 757, 759, 764, 789, 790, 791, 792, 832, and 844 each coordinate ATP. The Mg(2+) site is built by Gln-832, Glu-844, and Asn-846. Mn(2+) contacts are provided by Gln-832, Glu-844, and Asn-846. One can recognise an MGS-like domain in the interval 955 to 1100 (GPLPTAGRAF…QEHAEHLTAA (146 aa)). The allosteric domain stretch occupies residues 955-1102 (GPLPTAGRAF…HAEHLTAARD (148 aa)).

The protein belongs to the CarB family. As to quaternary structure, composed of two chains; the small (or glutamine) chain promotes the hydrolysis of glutamine to ammonia, which is used by the large (or ammonia) chain to synthesize carbamoyl phosphate. Tetramer of heterodimers (alpha,beta)4. The cofactor is Mg(2+). Mn(2+) serves as cofactor.

It catalyses the reaction hydrogencarbonate + L-glutamine + 2 ATP + H2O = carbamoyl phosphate + L-glutamate + 2 ADP + phosphate + 2 H(+). It carries out the reaction hydrogencarbonate + NH4(+) + 2 ATP = carbamoyl phosphate + 2 ADP + phosphate + 2 H(+). It participates in amino-acid biosynthesis; L-arginine biosynthesis; carbamoyl phosphate from bicarbonate: step 1/1. Its pathway is pyrimidine metabolism; UMP biosynthesis via de novo pathway; (S)-dihydroorotate from bicarbonate: step 1/3. Functionally, large subunit of the glutamine-dependent carbamoyl phosphate synthetase (CPSase). CPSase catalyzes the formation of carbamoyl phosphate from the ammonia moiety of glutamine, carbonate, and phosphate donated by ATP, constituting the first step of 2 biosynthetic pathways, one leading to arginine and/or urea and the other to pyrimidine nucleotides. The large subunit (synthetase) binds the substrates ammonia (free or transferred from glutamine from the small subunit), hydrogencarbonate and ATP and carries out an ATP-coupled ligase reaction, activating hydrogencarbonate by forming carboxy phosphate which reacts with ammonia to form carbamoyl phosphate. This is Carbamoyl phosphate synthase large chain from Streptomyces griseus subsp. griseus (strain JCM 4626 / CBS 651.72 / NBRC 13350 / KCC S-0626 / ISP 5235).